We begin with the raw amino-acid sequence, 199 residues long: Molybdenum cofactor guanylyltransferase (199 aa).

GTP contacts are provided by residues 12-14 (LAG), Lys25, Asn53, Asp71, and Asp101. Mg(2+) is bound at residue Asp101.

Belongs to the MobA family. Monomer. Requires Mg(2+) as cofactor.

It is found in the cytoplasm. The enzyme catalyses Mo-molybdopterin + GTP + H(+) = Mo-molybdopterin guanine dinucleotide + diphosphate. Transfers a GMP moiety from GTP to Mo-molybdopterin (Mo-MPT) cofactor (Moco or molybdenum cofactor) to form Mo-molybdopterin guanine dinucleotide (Mo-MGD) cofactor. This Cupriavidus taiwanensis (strain DSM 17343 / BCRC 17206 / CCUG 44338 / CIP 107171 / LMG 19424 / R1) (Ralstonia taiwanensis (strain LMG 19424)) protein is Molybdenum cofactor guanylyltransferase.